The primary structure comprises 282 residues: Phosphoglucan phosphatase LSF2, chloroplastic (282 aa).

The N-terminal 61 residues, 1–61, are a transit peptide targeting the chloroplast; it reads MSVIGSKSCI…GENPGTNGVS (61 aa). Substrate is bound by residues Y83, 153 to 156, D161, and 177 to 180; these read RHMR and SLEW. Positions 92–249 constitute a Tyrosine-protein phosphatase domain; the sequence is NYTLIRDELI…TYDLAKNDPW (158 aa). Residue C193 is the Phosphocysteine intermediate of the active site. Positions 193 to 199 match the Glucan phosphatase signature motif CXAGXGR motif; sequence CSAGLGR. Residues 194–199, G230, K245, E251, 259–263, and E268 each bind substrate; these read SAGLGR and NAFED.

As to expression, widely expressed.

The protein localises to the plastid. Its subcellular location is the chloroplast. Starch-associated phosphoglucan phosphatase that selectively dephosphorylates the glucan C3 position. Probably participates in the regulation of starch degradation. The polypeptide is Phosphoglucan phosphatase LSF2, chloroplastic (LSF2) (Arabidopsis thaliana (Mouse-ear cress)).